The primary structure comprises 43 residues: Protein PsbN (43 aa).

A helical membrane pass occupies residues 7–27 (VTIFISGLLVSFTGYALYIAF).

It belongs to the PsbN family.

The protein localises to the plastid. It localises to the chloroplast thylakoid membrane. Functionally, may play a role in photosystem I and II biogenesis. This Dioscorea bulbifera (Air potato) protein is Protein PsbN.